The following is a 491-amino-acid chain: Tryptophan 5-hydroxylase 2 (491 aa).

S19 is modified (phosphoserine). A disordered region spans residues 33–63; sequence NLTVNKSNSGKNDDKKGNKGSSRSETAPDSG. The 76-residue stretch at 66–141 folds into the ACT domain; that stretch reads AVVFSLRNEV…TIVTLNPPEN (76 aa). The Fe cation site is built by H319, H324, and E364.

Belongs to the biopterin-dependent aromatic amino acid hydroxylase family. In terms of assembly, interacts with DNAJC12. Requires Fe(2+) as cofactor.

The enzyme catalyses (6R)-L-erythro-5,6,7,8-tetrahydrobiopterin + L-tryptophan + O2 = 5-hydroxy-L-tryptophan + (4aS,6R)-4a-hydroxy-L-erythro-5,6,7,8-tetrahydrobiopterin. The protein operates within aromatic compound metabolism; serotonin biosynthesis; serotonin from L-tryptophan: step 1/2. This chain is Tryptophan 5-hydroxylase 2 (TPH2), found in Equus caballus (Horse).